A 327-amino-acid chain; its full sequence is Xylosidase/arabinosidase 43A (327 aa).

Residue D12 is the Proton acceptor of the active site. E228 acts as the Proton donor in catalysis.

Belongs to the glycosyl hydrolase 43 family.

Its subcellular location is the secreted. The enzyme catalyses Hydrolysis of (1-&gt;4)-beta-D-xylans, to remove successive D-xylose residues from the non-reducing termini.. It carries out the reaction Hydrolysis of terminal non-reducing alpha-L-arabinofuranoside residues in alpha-L-arabinosides.. Activity is inhibited by Ag(+), Li(+), Pb(2+), Cu(2+), Cr(3+), Co(3+), Fe(3+), Ni(2+), Mg(2+), Zn(2+), EDTA and SDS; but not by Mn(2+), Ca(2+) and beta-mercaptoethanol. In terms of biological role, bifunctional beta-xylosidase/alpha-L-arabinosidases with a low level of xylanase activity. Is most active on 4-nitrophenyl beta-D-xylopyranoside (pNPX) (defined as 100%), moderate on p-nitrophenyl-alpha-L-arabinofuranoside (pNPA) (23.7%), and weak on beechwood xylan (15.9%) and birchwood xylan (15.2%). Is able to attack xylooligosacchardies with degrees of polymerisation of 2-5, releasing the amounts of reducing sugars in the order of xylopentose &gt; xylotetraose &gt; xylotriose &gt; xylobiose, i.e. the rate of xylose released from xylooligosacchardies increased with the chain length. No activity is detected in the presence of carboxymethyl cellulose-sodium (CMC-Na), sugar beet arabinan, AZCL-arabinan (debranched), 4-nitrophenyl a-D - galactopyranoside, 2-nitrophenyl beta-D-galactopyranoside, and 4-nitrophenyl alpha-D-glucopyranoside. The sequence is that of Xylosidase/arabinosidase 43A from Humicola insolens (Soft-rot fungus).